The following is a 620-amino-acid chain: MAU2 chromatid cohesion factor homolog (620 aa).

TPR repeat units lie at residues Gly-452–Glu-485 and Ser-492–Ile-525.

It belongs to the SCC4/mau-2 family. In terms of assembly, interacts with Nipped-B to form the cohesin loading complex.

It is found in the nucleus. It localises to the nucleoplasm. In terms of biological role, required for association of the cohesin complex with chromatin during interphase. Plays a role in sister chromatid cohesion and normal progression through prometaphase. In Drosophila persimilis (Fruit fly), this protein is MAU2 chromatid cohesion factor homolog.